The following is a 182-amino-acid chain: MNTNDPVGWHGTTILCVRRDEQVAMAGDGQVSLGNTVVKGNARKVRRIGNGNVVAGFAGATADAFTLLERLEAKLERFPNQLERACVELAKDWRTDRYLRRLEAMMAVADRTHAYTLTGNGDVLEPEDGIIAIGSGGNYALAAARALISVDGMTAEDIARRAMKIAGDICVYTNHHVTVEIL.

Residue Thr-12 is part of the active site. Residues Gly-167, Cys-170, and Thr-173 each contribute to the Na(+) site.

The protein belongs to the peptidase T1B family. HslV subfamily. In terms of assembly, a double ring-shaped homohexamer of HslV is capped on each side by a ring-shaped HslU homohexamer. The assembly of the HslU/HslV complex is dependent on binding of ATP.

The protein localises to the cytoplasm. The enzyme catalyses ATP-dependent cleavage of peptide bonds with broad specificity.. Allosterically activated by HslU binding. Protease subunit of a proteasome-like degradation complex believed to be a general protein degrading machinery. The chain is ATP-dependent protease subunit HslV from Acidiphilium cryptum (strain JF-5).